Here is a 150-residue protein sequence, read N- to C-terminus: Lipoprotein signal peptidase (150 aa).

Transmembrane regions (helical) follow at residues 5–25, 59–79, and 83–103; these read LSLV…NWIV, QQWF…WFLW, and AQNW…GNFI. Catalysis depends on residues D113 and D129. Residues 124–144 traverse the membrane as a helical segment; it reads IFNIADILLSVGFVLLFIAIL.

Belongs to the peptidase A8 family.

It localises to the cell membrane. The catalysed reaction is Release of signal peptides from bacterial membrane prolipoproteins. Hydrolyzes -Xaa-Yaa-Zaa-|-(S,diacylglyceryl)Cys-, in which Xaa is hydrophobic (preferably Leu), and Yaa (Ala or Ser) and Zaa (Gly or Ala) have small, neutral side chains.. It participates in protein modification; lipoprotein biosynthesis (signal peptide cleavage). In terms of biological role, this protein specifically catalyzes the removal of signal peptides from prolipoproteins. This Lactococcus lactis subsp. lactis (strain IL1403) (Streptococcus lactis) protein is Lipoprotein signal peptidase.